Here is a 340-residue protein sequence, read N- to C-terminus: Arginase 1, mitochondrial (340 aa).

The transit peptide at 1 to 24 (MGGVAAGTRWIHHVRRLSAAKVST) directs the protein to the mitochondrion. 4 residues coordinate Mn(2+): His-159, Asp-183, His-185, and Asp-187. Substrate is bound by residues 185–189 (HPDIY) and 193–195 (EGN). Mn(2+)-binding residues include Asp-268 and Asp-270. Residue Glu-311 participates in substrate binding.

It belongs to the arginase family. The cofactor is Mn(2+).

It is found in the mitochondrion. It catalyses the reaction L-arginine + H2O = urea + L-ornithine. The protein operates within nitrogen metabolism; urea cycle; L-ornithine and urea from L-arginine: step 1/1. Functionally, catalyzes the hydrolysis of L-arginine to urea and L-ornithine. The latter can be utilized in the urea cycle or as a precursor for the synthesis of both polyamines and proline. This Oryza sativa subsp. indica (Rice) protein is Arginase 1, mitochondrial.